The chain runs to 117 residues: MNKKIGAIGEQLAVHYLKNKGYRILDCNYRTRLGEIDIIAILNDTIVFVEVKTRSSGAFGTPSEAVNYKKQMTIRRVSQQYLLSNRIGEDDWNLRFDVIEVQLIEKKYKINHMENAF.

It belongs to the UPF0102 family.

The protein is UPF0102 protein Clos_1471 of Alkaliphilus oremlandii (strain OhILAs) (Clostridium oremlandii (strain OhILAs)).